We begin with the raw amino-acid sequence, 258 residues long: 14-3-3-like protein F (258 aa).

Belongs to the 14-3-3 family.

In Nicotiana tabacum (Common tobacco), this protein is 14-3-3-like protein F.